Here is a 401-residue protein sequence, read N- to C-terminus: Chaperone protein DnaJ (401 aa).

Residues 4-69 (DYYEVLGVSR…DKRRRYDQFG (66 aa)) enclose the J domain. Residues 156–237 (GVEKTLKIKK…CYGEGIKQGD (82 aa)) form a CR-type zinc finger. Positions 169, 172, 185, 188, 211, 214, 225, and 228 each coordinate Zn(2+). CXXCXGXG motif repeat units follow at residues 169-176 (CKECNGSG), 185-192 (CQTCHGSG), 211-218 (CPTCGGEG), and 225-232 (CTACYGEG). The segment at 377–401 (AFSPSGSNNDKEEKSFFEKARDIFS) is disordered. Basic and acidic residues predominate over residues 385 to 401 (NDKEEKSFFEKARDIFS).

It belongs to the DnaJ family. In terms of assembly, homodimer. Requires Zn(2+) as cofactor.

It is found in the cytoplasm. Functionally, participates actively in the response to hyperosmotic and heat shock by preventing the aggregation of stress-denatured proteins and by disaggregating proteins, also in an autonomous, DnaK-independent fashion. Unfolded proteins bind initially to DnaJ; upon interaction with the DnaJ-bound protein, DnaK hydrolyzes its bound ATP, resulting in the formation of a stable complex. GrpE releases ADP from DnaK; ATP binding to DnaK triggers the release of the substrate protein, thus completing the reaction cycle. Several rounds of ATP-dependent interactions between DnaJ, DnaK and GrpE are required for fully efficient folding. Also involved, together with DnaK and GrpE, in the DNA replication of plasmids through activation of initiation proteins. The protein is Chaperone protein DnaJ of Chlorobium limicola (strain DSM 245 / NBRC 103803 / 6330).